The sequence spans 480 residues: Endoplasmic reticulum lectin 1 (480 aa).

The first 27 residues, Met-1 to Gly-27, serve as a signal peptide directing secretion. MRH domains are found at residues Ser-108 to His-245 and Ser-339 to Ile-466. Cys-110 and Cys-123 are oxidised to a cystine. Positions Val-152 to His-172 are disordered. Basic and acidic residues predominate over residues Gln-163–His-172. Intrachain disulfides connect Cys-198–Cys-231, Cys-214–Cys-243, Cys-341–Cys-354, Cys-418–Cys-452, and Cys-433–Cys-464.

It is found in the endoplasmic reticulum lumen. Functionally, probable lectin that binds selectively to improperly folded lumenal proteins. May function in endoplasmic reticulum quality control and endoplasmic reticulum-associated degradation (ERAD) of both non-glycosylated proteins and glycoproteins. This Xenopus laevis (African clawed frog) protein is Endoplasmic reticulum lectin 1 (erlec1).